The following is a 182-amino-acid chain: P21 prophage-derived terminase small subunit (182 aa).

Position 31–36 (31–36 (SKGSKG)) interacts with ATP.

It belongs to the terminase small subunit family. Heterooligomer of gp1 and gp2.

Its function is as follows. Involved in the initiation of the phage DNA packaging into the prohead. Processes replicating concatemeric DNA into pieces of unit length with cohesive ends. In Escherichia coli O6:H1 (strain CFT073 / ATCC 700928 / UPEC), this protein is P21 prophage-derived terminase small subunit (nohA).